A 451-amino-acid polypeptide reads, in one-letter code: Methylenetetrahydrofolate--tRNA-(uracil-5-)-methyltransferase TrmFO (451 aa).

9-14 (GGGMAG) contributes to the FAD binding site.

Belongs to the MnmG family. TrmFO subfamily. Requires FAD as cofactor.

It is found in the cytoplasm. It catalyses the reaction uridine(54) in tRNA + (6R)-5,10-methylene-5,6,7,8-tetrahydrofolate + NADH + H(+) = 5-methyluridine(54) in tRNA + (6S)-5,6,7,8-tetrahydrofolate + NAD(+). The catalysed reaction is uridine(54) in tRNA + (6R)-5,10-methylene-5,6,7,8-tetrahydrofolate + NADPH + H(+) = 5-methyluridine(54) in tRNA + (6S)-5,6,7,8-tetrahydrofolate + NADP(+). Catalyzes the folate-dependent formation of 5-methyl-uridine at position 54 (M-5-U54) in all tRNAs. The polypeptide is Methylenetetrahydrofolate--tRNA-(uracil-5-)-methyltransferase TrmFO (Dinoroseobacter shibae (strain DSM 16493 / NCIMB 14021 / DFL 12)).